A 1349-amino-acid polypeptide reads, in one-letter code: Elongator complex protein 1 (1349 aa).

Residues Ser-529, Ser-539, Ser-551, Ser-636, and Ser-828 each carry the phosphoserine modification. The tract at residues 919 to 1349 is mediates dimerization; that stretch reads QDVNVVYKSA…DFPKSHIVDF (431 aa). Ser-1198 and Ser-1202 each carry phosphoserine; by HRR25. Ser-1205 and Ser-1209 each carry phosphoserine. The span at 1214-1228 shows a compositional bias: low complexity; it reads YTGKTGGTAKTGASR. The disordered stretch occupies residues 1214–1245; it reads YTGKTGGTAKTGASRRTAKNKRREERKRARGK. The interval 1228–1246 is required for binding to tRNA; sequence RRTAKNKRREERKRARGKK.

This sequence belongs to the ELP1/IKA1 family. In terms of assembly, homodimer; dimerization promotes ELP1/IKI3 stability and elongator complex formation. Component of the elongator complex which consists of ELP1/IKI3, ELP2, ELP3, ELP4, ELP5/IKI1 and ELP6. The elongator complex is composed of two copies of the Elp123 subcomplex (composed of ELP1/IKI3, ELP2 and ELP3) and two copies of the Elp456 subcomplex (composed of ELP4, ELP5/IKI1 and ELP6). The Elp123 subcomplex forms a two-lobed scaffold, which binds the Elp456 subcomplex asymmetrically. In the complex, ELP1/IKI3 interacts with ELP2. In each lobe, ELP2 is tightly sandwiched between ELP1/IKI3 and ELP3. The Elp123 subcomplex binds tRNA through ELP1/IKI3 and ELP3 and can bind 2 tRNAs simultaneously. tRNA-binding induces conformational rearrangements which precisely position the targeted anticodon base in the active site. The Elp456 subcomplex binds tRNA and has ATPase activity. ELP1/IKI3 interacts with HRR25 and KTI12. Interacts with KTI11/DPH3. Post-translationally, phosphorylation promotes the tRNA modification function of the elongator complex.

The protein resides in the cytoplasm. It is found in the nucleus. The protein operates within tRNA modification; 5-methoxycarbonylmethyl-2-thiouridine-tRNA biosynthesis. Its function is as follows. Component of the elongator complex which is required for multiple tRNA modifications, including mcm5U (5-methoxycarbonylmethyl uridine), mcm5s2U (5-methoxycarbonylmethyl-2-thiouridine), and ncm5U (5-carbamoylmethyl uridine). The elongator complex catalyzes formation of carboxymethyluridine in the wobble base at position 34 in tRNAs. Functions as a gamma-toxin target (TOT); disruption of the complex confers resistance to Kluyveromyces lactis toxin zymocin (pGKL1 killer toxin). May also be involved in sensitivity to Pichia inositovora toxin. ELP1/IKI3 binds to tRNA, mediating interaction of the elongator complex with tRNA. Independently, may be involved in polarized exocytosis. This chain is Elongator complex protein 1 (IKI3), found in Saccharomyces cerevisiae (strain ATCC 204508 / S288c) (Baker's yeast).